The primary structure comprises 428 residues: Histidinol dehydrogenase (428 aa).

3 residues coordinate NAD(+): Y127, Q185, and N208. The substrate site is built by S234, Q256, and H259. Q256 and H259 together coordinate Zn(2+). Active-site proton acceptor residues include E323 and H324. Substrate contacts are provided by H324, D357, E411, and H416. D357 is a binding site for Zn(2+). H416 is a Zn(2+) binding site.

It belongs to the histidinol dehydrogenase family. Zn(2+) serves as cofactor.

It carries out the reaction L-histidinol + 2 NAD(+) + H2O = L-histidine + 2 NADH + 3 H(+). It functions in the pathway amino-acid biosynthesis; L-histidine biosynthesis; L-histidine from 5-phospho-alpha-D-ribose 1-diphosphate: step 9/9. Its function is as follows. Catalyzes the sequential NAD-dependent oxidations of L-histidinol to L-histidinaldehyde and then to L-histidine. The polypeptide is Histidinol dehydrogenase (Mannheimia succiniciproducens (strain KCTC 0769BP / MBEL55E)).